The chain runs to 2245 residues: Myosin-J heavy chain (2245 aa).

The 53-residue stretch at 25-77 (QEGAGVWIPDQELGWIGADVIEHSETSADQVLVRTEDDREVKIPLSKVFQKNP) folds into the Myosin N-terminal SH3-like domain. The 741-residue stretch at 81–821 (EGVDDLSFLS…QLASLEDMRL (741 aa)) folds into the Myosin motor domain. An ATP-binding site is contributed by 174–181 (GESGAGKT). Residues 646–672 (FTQSPGGHPQGNGGPTSSNTKGTSGSS) are disordered. Low complexity predominate over residues 660–672 (PTSSNTKGTSGSS). Positions 669-749 (SGSSSMKFLS…GFPTRRLLSE (81 aa)) are actin-binding. IQ domains are found at residues 824–851 (LDRSATVIQKRWKGYLYRKRYKQLRDAS), 872–901 (RTHSAILIQKVWRAHRDRVQYQKIRDASLQ), and 943–972 (KLRGIILIQARWRMKLAKRVYIQLRAEARS). Residues 973–1812 (LRTVQEQKNK…NYHMLEDRME (840 aa)) adopt a coiled-coil conformation. The interval 1504-1524 (KKQLTQLQQQHEQSSTQLLLA) is disordered. Residues 1506–1523 (QLTQLQQQHEQSSTQLLL) are compositionally biased toward low complexity. The 220-residue stretch at 1969–2188 (IDFIDQLQQS…IASICPPNKS (220 aa)) folds into the Dilute domain.

This sequence belongs to the TRAFAC class myosin-kinesin ATPase superfamily. Myosin family. As to quaternary structure, homodimer that associates with six light chains.

It is found in the contractile vacuole. Its function is as follows. Processive motor protein that can move over long distances along F-actin without disassociating; processiveness depends on high physiological Mg(2+) concentrations. Presents a high actin affinity in the presence of ADP, fast ATP hydrolysis, and a high steady-state ATPase activity in the presence of actin that is rate limited by ADP release. Physiological decrease of free Mg(2+) ions leads to an increased rate of ADP release and shortening of the fraction of time it spends in the strong acting binding states. In Dictyostelium discoideum (Social amoeba), this protein is Myosin-J heavy chain (myoJ).